A 250-amino-acid chain; its full sequence is Ubiquitin-conjugating enzyme E2 6 (250 aa).

The Cytoplasmic segment spans residues 1 to 232 (MATKQAHKRL…DGKEPNDSSS (232 aa)). Positions 5-167 (QAHKRLTKEY…VQENVETLEK (163 aa)) constitute a UBC core domain. Catalysis depends on C87, which acts as the Glycyl thioester intermediate. S139 bears the Phosphoserine mark. A Phosphothreonine modification is found at T178. The segment at 209–229 (AEQALRQSENNSKKDGKEPND) is disordered. A compositionally biased stretch (basic and acidic residues) spans 219-228 (NSKKDGKEPN). Residues 233 to 249 (MVYIGIAIFLFLVGLFM) form a helical membrane-spanning segment.

The protein belongs to the ubiquitin-conjugating enzyme family.

It is found in the endoplasmic reticulum membrane. It carries out the reaction S-ubiquitinyl-[E1 ubiquitin-activating enzyme]-L-cysteine + [E2 ubiquitin-conjugating enzyme]-L-cysteine = [E1 ubiquitin-activating enzyme]-L-cysteine + S-ubiquitinyl-[E2 ubiquitin-conjugating enzyme]-L-cysteine.. It participates in protein modification; protein ubiquitination. Functionally, catalyzes the covalent attachment of ubiquitin to other proteins. Functions in degradation of misfolded or regulated proteins localized in the endoplasmic reticulum (ER) lumen or membrane via the ubiquitin-proteasome system. Cognate E2 conjugating enzyme for the DOA10 ubiquitin ligase complex, which is part of the ERAD-C pathway responsible for the rapid degradation of membrane proteins with misfolded cytoplasmic domains. This is Ubiquitin-conjugating enzyme E2 6 (UBC6) from Saccharomyces cerevisiae (strain ATCC 204508 / S288c) (Baker's yeast).